The primary structure comprises 422 residues: Imidazolonepropionase (422 aa).

Fe(3+)-binding residues include His-82 and His-84. 2 residues coordinate Zn(2+): His-82 and His-84. Residues Arg-91, Tyr-154, and His-187 each coordinate 4-imidazolone-5-propanoate. Tyr-154 contacts N-formimidoyl-L-glutamate. His-252 lines the Fe(3+) pocket. His-252 lines the Zn(2+) pocket. Glu-255 contacts 4-imidazolone-5-propanoate. Asp-327 contributes to the Fe(3+) binding site. Asp-327 provides a ligand contact to Zn(2+). Residues Asn-329 and Gly-331 each contribute to the N-formimidoyl-L-glutamate site. Ser-332 provides a ligand contact to 4-imidazolone-5-propanoate.

Belongs to the metallo-dependent hydrolases superfamily. HutI family. Zn(2+) is required as a cofactor. It depends on Fe(3+) as a cofactor.

The protein localises to the cytoplasm. It carries out the reaction 4-imidazolone-5-propanoate + H2O = N-formimidoyl-L-glutamate. The protein operates within amino-acid degradation; L-histidine degradation into L-glutamate; N-formimidoyl-L-glutamate from L-histidine: step 3/3. In terms of biological role, catalyzes the hydrolytic cleavage of the carbon-nitrogen bond in imidazolone-5-propanoate to yield N-formimidoyl-L-glutamate. It is the third step in the universal histidine degradation pathway. This is Imidazolonepropionase from Alkaliphilus oremlandii (strain OhILAs) (Clostridium oremlandii (strain OhILAs)).